The following is a 203-amino-acid chain: Peptidyl-tRNA hydrolase (203 aa).

Tyr-18 contacts tRNA. The active-site Proton acceptor is the His-23. Residues Phe-69, Asn-71, and Asn-117 each contribute to the tRNA site.

It belongs to the PTH family. In terms of assembly, monomer.

The protein localises to the cytoplasm. The catalysed reaction is an N-acyl-L-alpha-aminoacyl-tRNA + H2O = an N-acyl-L-amino acid + a tRNA + H(+). Hydrolyzes ribosome-free peptidyl-tRNAs (with 1 or more amino acids incorporated), which drop off the ribosome during protein synthesis, or as a result of ribosome stalling. Its function is as follows. Catalyzes the release of premature peptidyl moieties from peptidyl-tRNA molecules trapped in stalled 50S ribosomal subunits, and thus maintains levels of free tRNAs and 50S ribosomes. This is Peptidyl-tRNA hydrolase from Prochlorococcus marinus subsp. pastoris (strain CCMP1986 / NIES-2087 / MED4).